We begin with the raw amino-acid sequence, 481 residues long: Protein NRT1/ PTR FAMILY 1.3 (481 aa).

12 helical membrane passes run 32 to 52 (LAYF…YGMG), 57 to 77 (ANIL…GAFI), 88 to 108 (IGFG…TTII), 124 to 144 (LLKS…AGGV), 173 to 193 (FNWY…LLVF), 202 to 222 (IGFG…FAAS), 259 to 279 (IWST…FIVL), 302 to 322 (IFLV…IVPL), 333 to 353 (LGVM…ISAL), 374 to 394 (AMWL…NTIA), 422 to 442 (ASLI…GSWI), and 451 to 471 (LDYY…YFVW).

It belongs to the major facilitator superfamily. Proton-dependent oligopeptide transporter (POT/PTR) (TC 2.A.17) family. Expressed in roots.

Its subcellular location is the membrane. This chain is Protein NRT1/ PTR FAMILY 1.3 (NPF1.3), found in Arabidopsis thaliana (Mouse-ear cress).